The primary structure comprises 307 residues: GTPase Era (307 aa).

The Era-type G domain maps to 14-184 (HSGFVAIVGK…REQILDILPE (171 aa)). Positions 22–29 (GKPNVGKS) are G1. Residue 22–29 (GKPNVGKS) coordinates GTP. The interval 48 to 52 (QTTRR) is G2. The tract at residues 69–72 (DTPG) is G3. Residues 69–73 (DTPGL) and 131–134 (NKTD) each bind GTP. The segment at 131–134 (NKTD) is G4. Positions 162–164 (LSA) are G5. A KH type-2 domain is found at 215–292 (LREELPYAVA…FLGLEVIVIP (78 aa)).

This sequence belongs to the TRAFAC class TrmE-Era-EngA-EngB-Septin-like GTPase superfamily. Era GTPase family. Monomer.

It is found in the cytoplasm. It localises to the cell membrane. Its function is as follows. An essential GTPase that binds both GDP and GTP, with rapid nucleotide exchange. Plays a role in 16S rRNA processing and 30S ribosomal subunit biogenesis and possibly also in cell cycle regulation and energy metabolism. This Deinococcus deserti (strain DSM 17065 / CIP 109153 / LMG 22923 / VCD115) protein is GTPase Era.